A 157-amino-acid chain; its full sequence is UPF0758 protein VC_0510 (157 aa).

The MPN domain maps to 36-157 (ALTNPDATKE…CTSFAERGWL (122 aa)). Residues histidine 107, histidine 109, and aspartate 120 each contribute to the Zn(2+) site. Positions 107–120 (HNHPSGDSTPSQAD) match the JAMM motif motif.

Belongs to the UPF0758 family.

The chain is UPF0758 protein VC_0510 from Vibrio cholerae serotype O1 (strain ATCC 39315 / El Tor Inaba N16961).